The sequence spans 346 residues: MDGNMKALIKKPGEPGASFELVPIPKIDKHEVLIKVKAASICGTDVHIYNWDEWAKSRVKPPYVFGHEFSGEVVQVGENVTTVKEGEYVSAETHIVCGKCLPCLTGKEHVCKKTLILGVDTDGCFAEYVKMPAANIWKNPAGMPEDLASIQEPLGNAVHTVLTGMTAGVKVAVVGCGPIGLMAVAVAKASGAAQVIAIDKNEYRLDLALQMGATDIISVEKEDPLKNVSALTNGEGADLVCEMSGHPTAIRQSLKMAANGGRVHVLSLPEHPVCIDMTNDIVFKGLTVQGITGRKMFETWRQVSGLLQSGTIQIKPVITHRFPMEEFEKGFELMRKGQCGKVVLIP.

Cysteine 42 lines the Zn(2+) pocket. Catalysis depends on charge relay system residues threonine 44 and histidine 47. Residues histidine 67, glutamate 68, cysteine 97, cysteine 100, cysteine 103, and cysteine 111 each contribute to the Zn(2+) site. Residues isoleucine 179, aspartate 199, arginine 204, 266-268, and 291-292 each bind NAD(+); these read LSL and IT.

This sequence belongs to the zinc-containing alcohol dehydrogenase family. As to quaternary structure, homotetramer. Zn(2+) serves as cofactor.

Its subcellular location is the cytoplasm. It catalyses the reaction L-threonine + NAD(+) = (2S)-2-amino-3-oxobutanoate + NADH + H(+). It functions in the pathway amino-acid degradation; L-threonine degradation via oxydo-reductase pathway; glycine from L-threonine: step 1/2. Catalyzes the NAD(+)-dependent oxidation of L-threonine to 2-amino-3-ketobutyrate. This is L-threonine 3-dehydrogenase from Bacillus licheniformis (strain ATCC 14580 / DSM 13 / JCM 2505 / CCUG 7422 / NBRC 12200 / NCIMB 9375 / NCTC 10341 / NRRL NRS-1264 / Gibson 46).